A 293-amino-acid polypeptide reads, in one-letter code: 4-hydroxy-tetrahydrodipicolinate synthase (293 aa).

Position 45 (Ser45) interacts with pyruvate. Tyr133 serves as the catalytic Proton donor/acceptor. Lys161 functions as the Schiff-base intermediate with substrate in the catalytic mechanism. Ile203 is a pyruvate binding site.

The protein belongs to the DapA family. In terms of assembly, homotetramer; dimer of dimers.

The protein resides in the cytoplasm. It carries out the reaction L-aspartate 4-semialdehyde + pyruvate = (2S,4S)-4-hydroxy-2,3,4,5-tetrahydrodipicolinate + H2O + H(+). The protein operates within amino-acid biosynthesis; L-lysine biosynthesis via DAP pathway; (S)-tetrahydrodipicolinate from L-aspartate: step 3/4. Catalyzes the condensation of (S)-aspartate-beta-semialdehyde [(S)-ASA] and pyruvate to 4-hydroxy-tetrahydrodipicolinate (HTPA). The protein is 4-hydroxy-tetrahydrodipicolinate synthase of Psychromonas ingrahamii (strain DSM 17664 / CCUG 51855 / 37).